A 215-amino-acid chain; its full sequence is 3,4-dihydroxy-2-butanone 4-phosphate synthase (215 aa).

D-ribulose 5-phosphate-binding positions include R38–E39, D43, R151–T155, and E175. E39 is a binding site for Mg(2+). H154 is a binding site for Mg(2+).

It belongs to the DHBP synthase family. In terms of assembly, homodimer. The cofactor is Mg(2+). Mn(2+) is required as a cofactor.

The catalysed reaction is D-ribulose 5-phosphate = (2S)-2-hydroxy-3-oxobutyl phosphate + formate + H(+). The protein operates within cofactor biosynthesis; riboflavin biosynthesis; 2-hydroxy-3-oxobutyl phosphate from D-ribulose 5-phosphate: step 1/1. In terms of biological role, catalyzes the conversion of D-ribulose 5-phosphate to formate and 3,4-dihydroxy-2-butanone 4-phosphate. This chain is 3,4-dihydroxy-2-butanone 4-phosphate synthase, found in Haemophilus influenzae (strain PittEE).